Here is a 94-residue protein sequence, read N- to C-terminus: Small ribosomal subunit protein bS6 (94 aa).

The protein belongs to the bacterial ribosomal protein bS6 family.

Its function is as follows. Binds together with bS18 to 16S ribosomal RNA. This Akkermansia muciniphila (strain ATCC BAA-835 / DSM 22959 / JCM 33894 / BCRC 81048 / CCUG 64013 / CIP 107961 / Muc) protein is Small ribosomal subunit protein bS6.